Reading from the N-terminus, the 227-residue chain is DNA repair protein RecO (227 aa).

This sequence belongs to the RecO family.

Involved in DNA repair and RecF pathway recombination. The sequence is that of DNA repair protein RecO from Pseudomonas entomophila (strain L48).